The chain runs to 202 residues: Small ribosomal subunit protein uS5 (202 aa).

The 64-residue stretch at 50-113 folds into the S5 DRBM domain; the sequence is LKQELLNVNI…REAKLNLIPV (64 aa).

It belongs to the universal ribosomal protein uS5 family. As to quaternary structure, part of the 30S ribosomal subunit. Contacts protein S4.

In terms of biological role, with S4 and S12 plays an important role in translational accuracy. The sequence is that of Small ribosomal subunit protein uS5 from Pyrobaculum arsenaticum (strain DSM 13514 / JCM 11321 / PZ6).